The chain runs to 423 residues: MRFRWKFFGSLLCVTGLLLVLYRQLGNVPQPPPGPASAQGSPSLTATSGYFRALEDHVPRRDARQGGKKKTNWNNVRAPEQKPNPPMPEEWMHLAVVACGDRLEETVTMLKSAVLFSFKKIKFHIFAEDSLKSDFQMKLEIWPQQISRKIEYKIYPITFPGGNTQEWKKLFKPCAAQRLFLPMLLQDVDSLLYVDTDVLFLRPLDHVWAFLRRFNDTQLAAMAPEHEISKIGWYSRFARHPFYGTTGVNSGVMLMNLTRIRNQHFKNNMIPAGLTWEEMLHPLYQKYKNYITWGDQDLLNIIFYFNPEMLYVFPCHWNYRPDHCMYGSNCKAAEEEGVSILHGNRGVYHDEKQPAFKAFYEVIRDYTFDDNLFQSMYFPLQSKFLESVHTLCGRIPQVFLKQIEKTMKMMYERRVVVHIRSDV.

The Cytoplasmic segment spans residues 1–6; that stretch reads MRFRWK. A helical; Signal-anchor for type II membrane protein transmembrane segment spans residues 7–26; it reads FFGSLLCVTGLLLVLYRQLG. The Lumenal portion of the chain corresponds to 27-423; that stretch reads NVPQPPPGPA…RVVVHIRSDV (397 aa). The disordered stretch occupies residues 60–85; it reads RRDARQGGKKKTNWNNVRAPEQKPNP. 2 N-linked (GlcNAc...) asparagine glycosylation sites follow: Asn-215 and Asn-256.

The protein belongs to the glycosyltransferase 8 family.

Its subcellular location is the membrane. It carries out the reaction 3-O-(beta-D-glucosyl)-L-seryl-[EGF-like domain protein] + UDP-alpha-D-xylose = 3-O-[alpha-D-xylosyl-(1-&gt;3)-beta-D-glucosyl]-L-seryl-[EGF-like domain protein] + UDP + H(+). Functionally, glycosyltransferase which elongates the O-linked glucose attached to EGF-like repeats in the extracellular domain of Notch proteins by catalyzing the addition of xylose. This is Glucoside xylosyltransferase 2 (gxylt2) from Xenopus laevis (African clawed frog).